The chain runs to 216 residues: NADH dehydrogenase [ubiquinone] iron-sulfur protein 7, mitochondrial (216 aa).

A mitochondrion-targeting transit peptide spans methionine 1 to serine 37. [4Fe-4S] cluster is bound by residues cysteine 91 and cysteine 92. Arginine 114 carries the hydroxyarginine modification. Cysteine 156 and cysteine 186 together coordinate [4Fe-4S] cluster.

The protein belongs to the complex I 20 kDa subunit family. In terms of assembly, core subunit of respiratory chain NADH dehydrogenase (Complex I) which is composed of 45 different subunits. This is a component of the iron-sulfur (IP) fragment of the enzyme. [4Fe-4S] cluster serves as cofactor. In terms of processing, hydroxylated ar Arg-114 by NDUFAF5 early in the pathway of assembly of complex I, before the formation of the juncture between peripheral and membrane arms.

It is found in the mitochondrion inner membrane. It carries out the reaction a ubiquinone + NADH + 5 H(+)(in) = a ubiquinol + NAD(+) + 4 H(+)(out). Core subunit of the mitochondrial membrane respiratory chain NADH dehydrogenase (Complex I) which catalyzes electron transfer from NADH through the respiratory chain, using ubiquinone as an electron acceptor. Essential for the catalytic activity of complex I. The protein is NADH dehydrogenase [ubiquinone] iron-sulfur protein 7, mitochondrial (NDUFS7) of Bos taurus (Bovine).